A 172-amino-acid chain; its full sequence is Fimbrial-like protein FimF (172 aa).

The signal sequence occupies residues 1 to 21 (MILRRVFIAIGCVLFSPLSQA). A disulfide bond links Cys41 and Cys81.

Belongs to the fimbrial protein family.

It localises to the fimbrium. The sequence is that of Fimbrial-like protein FimF (fimF) from Salmonella typhimurium (strain LT2 / SGSC1412 / ATCC 700720).